We begin with the raw amino-acid sequence, 357 residues long: Dihydroorotate dehydrogenase (quinone) (357 aa).

FMN contacts are provided by residues 66–70 (AGFDK) and Thr90. Lys70 serves as a coordination point for substrate. Substrate is bound at residue 115–119 (NRMGF). 2 residues coordinate FMN: Asn143 and Asn176. A substrate-binding site is contributed by Asn176. The active-site Nucleophile is the Ser179. Residue Asn181 coordinates substrate. FMN contacts are provided by Lys212 and Thr240. Position 241-242 (241-242 (NT)) interacts with substrate. Residues Gly264, Gly293, and 314-315 (YT) contribute to the FMN site.

The protein belongs to the dihydroorotate dehydrogenase family. Type 2 subfamily. Monomer. The cofactor is FMN.

The protein localises to the cell membrane. It carries out the reaction (S)-dihydroorotate + a quinone = orotate + a quinol. It participates in pyrimidine metabolism; UMP biosynthesis via de novo pathway; orotate from (S)-dihydroorotate (quinone route): step 1/1. Catalyzes the conversion of dihydroorotate to orotate with quinone as electron acceptor. This Mycobacterium bovis (strain BCG / Pasteur 1173P2) protein is Dihydroorotate dehydrogenase (quinone).